Consider the following 1228-residue polypeptide: DNA-directed RNA polymerase subunit beta (1228 aa).

The protein belongs to the RNA polymerase beta chain family. As to quaternary structure, the RNAP catalytic core consists of 2 alpha, 1 beta, 1 beta' and 1 omega subunit. When a sigma factor is associated with the core the holoenzyme is formed, which can initiate transcription.

The catalysed reaction is RNA(n) + a ribonucleoside 5'-triphosphate = RNA(n+1) + diphosphate. In terms of biological role, DNA-dependent RNA polymerase catalyzes the transcription of DNA into RNA using the four ribonucleoside triphosphates as substrates. This Leptospira biflexa serovar Patoc (strain Patoc 1 / Ames) protein is DNA-directed RNA polymerase subunit beta.